The sequence spans 567 residues: Potassium-transporting ATPase potassium-binding subunit (567 aa).

Transmembrane regions (helical) follow at residues 3-23 (FIGW…VKPL), 64-84 (LTFT…IYAV), 136-156 (ALTH…MALI), 179-199 (LYVL…QGMP), 254-274 (LSNF…TNVF), 285-305 (WAIL…AYWA), 330-350 (FGIV…CGAV), 357-376 (FTAL…EIIV), 421-441 (MLAI…AVVL), 473-495 (AFGG…MFVG), and 527-547 (GGLF…LTFF).

This sequence belongs to the KdpA family. The system is composed of three essential subunits: KdpA, KdpB and KdpC.

Its subcellular location is the cell inner membrane. Functionally, part of the high-affinity ATP-driven potassium transport (or Kdp) system, which catalyzes the hydrolysis of ATP coupled with the electrogenic transport of potassium into the cytoplasm. This subunit binds the periplasmic potassium ions and delivers the ions to the membrane domain of KdpB through an intramembrane tunnel. This chain is Potassium-transporting ATPase potassium-binding subunit, found in Rhodopseudomonas palustris (strain ATCC BAA-98 / CGA009).